Reading from the N-terminus, the 385-residue chain is uncharacterized protein (385 aa).

Residues Asp-180, His-258, and His-275 each contribute to the Zn(2+) site.

Belongs to the iron-containing alcohol dehydrogenase family. The cofactor is Zn(2+).

This is an uncharacterized protein from Synechocystis sp. (strain ATCC 27184 / PCC 6803 / Kazusa).